The primary structure comprises 214 residues: MDAQLLQANKRLLRRAANVRQRYKMLATESFVADIKQILLRFIQKPNVIIMYISVLVLFAAHIDSNTHDILDDLAAQFPNNTFIEWAKSNFFRICGALVFIPVIIDTEEKHRNYLALVIFVFLMGFPQRSIMEYFIYSISFHVYAKAKHPVTRIFIIGAAVFSCVMFGIFTNEQLRKLYAELPKVPTHPVAVNRVEKVANRASRVSTEGTVNFG.

The next 4 helical transmembrane spans lie at 43–63 (IQKP…AAHI), 84–104 (IEWA…IPVI), 116–136 (ALVI…EYFI), and 150–170 (PVTR…FGIF).

It localises to the host membrane. This is an uncharacterized protein from Citrus leprosis virus C (isolate Citrus sinesis/Brazil/Cordeiropolis/2003) (CiLV-C).